We begin with the raw amino-acid sequence, 386 residues long: Putative gustatory receptor 92a (386 aa).

The Cytoplasmic segment spans residues 1–14 (MFEFLHQMSAPKLS). Residues 15 to 35 (TSILRYIFRYAQFIGVIFFCL) traverse the membrane as a helical segment. Residues 36-79 (HTRKDDKTVFIRNWLKWLNVTHRIITFTRFFWVYIASISIKTNR) are Extracellular-facing. N-linked (GlcNAc...) asparagine glycosylation is present at N54. A helical transmembrane segment spans residues 80 to 100 (VLQVLHGMRLVLSIPNVAVIL). Residues 101 to 141 (CYHIFRGPEIIDLINQFLRLFRQVSDLFKTKTPGFGGRREL) lie on the Cytoplasmic side of the membrane. The chain crosses the membrane as a helical span at residues 142–162 (ILILLNLISFAHEQTYLWFTI). Residues 163-169 (RKGFSWR) lie on the Extracellular side of the membrane. A helical transmembrane segment spans residues 170–190 (FLIDWWCDFYLVSATNIFIHI). The Cytoplasmic portion of the chain corresponds to 191-256 (NSIGYLSLGV…YHTSIMFHKL (66 aa)). Residues 257–277 (FVPLLFLALIYKVLLIALIGF) form a helical membrane-spanning segment. At 278–287 (NVAVEFYLNS) the chain is on the extracellular side. Residues 288–308 (FIFWILLGKHVLDLFLVTVSV) form a helical membrane-spanning segment. Over 309-356 (EGAVNQFLNIGMQFGNVGDLSKFQTTLDTLFLHLRLGHFRVSILGLFD) the chain is Cytoplasmic. Residues 357-377 (VTQMQYLQFLSALLSGLAFIA) form a helical membrane-spanning segment. Residues 378-386 (QYRMQVGNG) lie on the Extracellular side of the membrane.

Belongs to the insect chemoreceptor superfamily. Gustatory receptor (GR) family. Gr93a subfamily.

The protein localises to the cell membrane. Functionally, probable gustatory receptor which mediates acceptance or avoidance behavior, depending on its substrates. This Drosophila melanogaster (Fruit fly) protein is Putative gustatory receptor 92a (Gr92a).